Consider the following 218-residue polypeptide: N-(5'-phosphoribosyl)anthranilate isomerase (218 aa).

Belongs to the TrpF family.

It catalyses the reaction N-(5-phospho-beta-D-ribosyl)anthranilate = 1-(2-carboxyphenylamino)-1-deoxy-D-ribulose 5-phosphate. It participates in amino-acid biosynthesis; L-tryptophan biosynthesis; L-tryptophan from chorismate: step 3/5. In Bacillus licheniformis (strain ATCC 14580 / DSM 13 / JCM 2505 / CCUG 7422 / NBRC 12200 / NCIMB 9375 / NCTC 10341 / NRRL NRS-1264 / Gibson 46), this protein is N-(5'-phosphoribosyl)anthranilate isomerase.